Reading from the N-terminus, the 500-residue chain is NAD(P)H-quinone oxidoreductase chain 4, chloroplastic (500 aa).

A run of 14 helical transmembrane segments spans residues 4–24, 35–55, 87–107, 113–130, 134–154, 167–187, 211–231, 242–262, 272–292, 305–325, 330–350, 386–406, 416–436, and 462–482; these read FPWLTIIVVFPISAGSLMLFL, YTICICILELLLTTYAFCYNF, IGTILLTGFITTLATLAAFPV, LFHFLMLAMYSGQIGSFS, LLLFFIMWELELIPVYLLLSM, FILYTAGSSIFLLIGVLGISL, ILFYIAFLIAFAVKSPIIPLH, HYSTCMLLAGILLKMGAYGLV, AHSMFSPWLMVVGTIQIIYAA, IAYSSVSHMGFIIIGISSITD, GAILQIISHGFIGAALFFLAG, LALPGMSGFVAELIVFFGIIT, ILIIFVMAIGMILTPIYLLSM, and LFLSISILLPIIGIGIYPDFV.

This sequence belongs to the complex I subunit 4 family.

The protein localises to the plastid. The protein resides in the chloroplast thylakoid membrane. It catalyses the reaction a plastoquinone + NADH + (n+1) H(+)(in) = a plastoquinol + NAD(+) + n H(+)(out). The enzyme catalyses a plastoquinone + NADPH + (n+1) H(+)(in) = a plastoquinol + NADP(+) + n H(+)(out). The chain is NAD(P)H-quinone oxidoreductase chain 4, chloroplastic from Olimarabidopsis pumila (Dwarf rocket).